The primary structure comprises 82 residues: Chaplin-E (82 aa).

Residues 1 to 27 form the signal peptide; that stretch reads MKNLKKAAAVTMVAGGLIAAGAGMASA. One can recognise a Chaplin domain in the interval 41–81; that stretch reads SPGVASGNLVQAPIHIPVNAVGNSVNVIGVLNPAFGNLGVN.

This sequence belongs to the chaplin family. Short chaplin subfamily.

It is found in the cell surface. Its subcellular location is the secreted. It localises to the cell wall. The protein localises to the fimbrium. Its function is as follows. One of 8 partially redundant surface-active proteins required for efficient formation of aerial mycelium; the short chaplins assemble into a hydrophobic, amyloidal fibrillar surface layer that envelopes and protects aerial hyphae and spores, presumably anchored to the long chaplins. Chaplins have an overlapping function with the surface-active SapB peptide; chaplins are essential on minimal medium while on rich medium both chaplins and SapB are required for efficient aerial hyphae formation. Chaplins are also involved in cell attachment to a hydrophobic surface. Forms amyloid fibrils in vitro probably composed of stacked beta-sheets, at low extracellular concentrations individually restores the ability to form aerial hyphae to a chaplin-deficient strain, but does so less well than other short chaplins. A small chaplin extract (ChpD, ChpE, ChpF, ChpG and ChpH) self-assembles into 2 different amyloids; small fibrils at the air-water interface form an amphipathic membrane that resembles spore-surface structures involved in aerial hyphae formation, and hydrophilic fibrils in solution that resemble the fibers that attach cells to a hydrophobic surface. At the air-water interface the hydrophilic surface is in contact with water (probably equivalent to the peptidoglycan layer), while the hydrophobic face is exposed to the air, making the surface of the aerial hyphae hydrophobic. A minimal chaplin strain capable of forming aerial mycelium/hyphae on minimal medium contains ChpC, ChpE and ChpH. The strain also has restored rodlet formation on the hyphae surface. A second strain with ChpA, ChpD and ChpE makes slightly less robust hyphae. This essential chaplin may coordinate the assembly and/or polymerization of the other chaplins. A small chaplin extract applied to a chaplin-deficient strain restores aerial hyphae formation. The small chaplin extract forms an amyloid-like structure similar to that seen on the surface of cells without rodlets (rdlA-rdlB deletions), and is highly surface active, reducing surface tension from 72 to 26 mJ/m(2), which probably allows escape of hyphae from an aqueous environment into air. The chain is Chaplin-E from Streptomyces coelicolor (strain ATCC BAA-471 / A3(2) / M145).